We begin with the raw amino-acid sequence, 185 residues long: Ribosome-recycling factor (185 aa).

The segment at 140-166 is disordered; that stretch reads KRQEKDGDITEDEQRSLEKQVQKVTDD.

This sequence belongs to the RRF family.

It localises to the cytoplasm. Its function is as follows. Responsible for the release of ribosomes from messenger RNA at the termination of protein biosynthesis. May increase the efficiency of translation by recycling ribosomes from one round of translation to another. In Lactobacillus johnsonii (strain CNCM I-12250 / La1 / NCC 533), this protein is Ribosome-recycling factor.